The chain runs to 142 residues: Small ribosomal subunit protein uS9 (142 aa).

This sequence belongs to the universal ribosomal protein uS9 family. Component of the small ribosomal subunit. Mature ribosomes consist of a small (40S) and a large (60S) subunit. The 40S subunit contains about 32 different proteins and 1 molecule of RNA (18S). The 60S subunit contains 45 different proteins and 3 molecules of RNA (25S, 5.8S and 5S).

Its subcellular location is the cytoplasm. Functionally, component of the ribosome, a large ribonucleoprotein complex responsible for the synthesis of proteins in the cell. The small ribosomal subunit (SSU) binds messenger RNAs (mRNAs) and translates the encoded message by selecting cognate aminoacyl-transfer RNA (tRNA) molecules. The large subunit (LSU) contains the ribosomal catalytic site termed the peptidyl transferase center (PTC), which catalyzes the formation of peptide bonds, thereby polymerizing the amino acids delivered by tRNAs into a polypeptide chain. The nascent polypeptides leave the ribosome through a tunnel in the LSU and interact with protein factors that function in enzymatic processing, targeting, and the membrane insertion of nascent chains at the exit of the ribosomal tunnel. The sequence is that of Small ribosomal subunit protein uS9 (RPS16A) from Candida albicans (strain SC5314 / ATCC MYA-2876) (Yeast).